Reading from the N-terminus, the 797-residue chain is MAWDMCSQDSVWSDIECAALVGEDQPLCPDLPELDLSELDVNDLDTDSFLGGLKWCSDQSEIISNQYNNEPANIFEKIDEENEANLLAVLTETLDSLPVDEDGLPSFDALTDGAVTTDNEASPSSMPDGTPPPQEAEEPSLLKKLLLAPANTQLSYNECSGLSTQNHAANHTHRIRTNPAIVKTENSWSNKAKSICQQQKPQRRPCSELLKYLTTNDDPPHTKPTENRNSSRDKCASKKKSHTQPQSQHAQAKPTTLSLPLTPESPNDPKGSPFENKTIERTLSVELSGTAGLTPPTTPPHKANQDNPFKASPKLKPSCKTVVPPPTKRARYSECSGTQGSHSTKKGPEQSELYAQLSKSSGLSRGHEERKTKRPSLRLFGDHDYCQSLNSKTDILINISQELQDSRQLDFKDASCDWQGHICSSTDSGQCYLRETLEASKQVSPCSTRKQLQDQEIRAELNKHFGHPCQAVFDDKSDKTSELRDGDFSNEQFSKLPVFINSGLAMDGLFDDSEDESDKLSYPWDGTQPYSLFDVSPSCSSFNSPCRDSVSPPKSLFSQRPQRMRSRSRSFSRHRSCSRSPYSRSRSRSPGSRSSSRSCYYYESSHYRHRTHRNSPLYVRSRSRSPYSRRPRYDSYEAYEHERLKRDEYRKEHEKRESERAKQRERQKQKAIEERRVIYVGKIRPDTTRTELRDRFEVFGEIEECTVNLRDDGDSYGFITYRYTCDAFAALENGYTLRRSNETDFELYFCGRKQFFKSNYADLDTNSDDFDPASTKSKYDSLDFDSLLKEAQRSLRR.

K77 carries the N6-acetyllysine modification. The interval 101–138 (EDGLPSFDALTDGAVTTDNEASPSSMPDGTPPPQEAEE) is disordered. The segment covering 114–127 (AVTTDNEASPSSMP) has biased composition (polar residues). The short motif at 142–146 (LKKLL) is the LXXLL motif element. K144 bears the N6-acetyllysine mark. Phosphothreonine; by AMPK is present on T177. K183 is subject to N6-acetyllysine. The segment at 212–276 (YLTTNDDPPH…NDPKGSPFEN (65 aa)) is disordered. A compositionally biased stretch (basic and acidic residues) spans 218 to 236 (DPPHTKPTENRNSSRDKCA). Positions 243-259 (TQPQSQHAQAKPTTLSL) are enriched in polar residues. An N6-acetyllysine mark is found at K253, K270, K277, K320, K346, K412, K441, and K450. The segment at 289–376 (GTAGLTPPTT…HEERKTKRPS (88 aa)) is disordered. Residues 292–338 (GLTPPTTPPHKANQDNPFKASPKLKPSCKTVVPPPTKRARYSECSGT) are interaction with PPARG. The mediates interaction with RNF34 stretch occupies residues 349–797 (EQSELYAQLS…LKEAQRSLRR (449 aa)). At S538 the chain carries Phosphoserine; by AMPK. 3 disordered regions span residues 543–598 (NSPC…SSRS), 612–634 (HRNS…PRYD), and 648–668 (EYRK…ERQK). Residues 562–577 (QRMRSRSRSFSRHRSC) are compositionally biased toward basic residues. Positions 578-598 (SRSPYSRSRSRSPGSRSSSRS) are enriched in low complexity. The segment covering 621-630 (SRSRSPYSRR) has biased composition (basic residues). The RRM domain occupies 676-752 (RVIYVGKIRP…TDFELYFCGR (77 aa)). N6-acetyllysine occurs at positions 757 and 778.

Homooligomer. Interacts with MYBBP1A; inhibits MYBBP1A transcriptional activation. Interacts with PRDM16, LPIN1 and PML. Interacts (via LXXLL motif) with RORA and RORC (via AF-2 motif); activates RORA and RORC transcriptional activation. Interacts with LRPPRC. Interacts with FOXO1. Interacts with NR5A2. In terms of processing, phosphorylation by AMPK in skeletal muscle increases activation of its own promoter. Phosphorylated by CLK2. Post-translationally, heavily acetylated by KAT2A/GCN5 under conditions of high nutrients, leading to inactivation of PPARGC1A. Deacetylated by SIRT1 in low nutrients/high NAD conditions, leading to its activation. Ubiquitinated. Ubiquitination by RNF34 induces proteasomal degradation. White quadriceps and red tibialis anterior (TA) muscles, liver, kidney and brown adipose tissue (at protein level). Skeletal muscle, brown adipose tissue, heart, kidney and brain.

The protein resides in the nucleus. Its subcellular location is the PML body. Transcriptional coactivator for steroid receptors and nuclear receptors. Greatly increases the transcriptional activity of PPARG and thyroid hormone receptor on the uncoupling protein promoter. Can regulate key mitochondrial genes that contribute to the program of adaptive thermogenesis. Plays an essential role in metabolic reprogramming in response to dietary availability through coordination of the expression of a wide array of genes involved in glucose and fatty acid metabolism. Acts as a key regulator of gluconeogenesis: stimulates hepatic gluconeogenesis by increasing the expression of gluconeogenic enzymes, and acting together with FOXO1 to promote the fasting gluconeogenic program. Induces the expression of PERM1 in the skeletal muscle in an ESRRA-dependent manner. Also involved in the integration of the circadian rhythms and energy metabolism. Required for oscillatory expression of clock genes, such as BMAL1 and NR1D1, through the coactivation of RORA and RORC, and metabolic genes, such as PDK4 and PEPCK. This chain is Peroxisome proliferator-activated receptor gamma coactivator 1-alpha (Ppargc1a), found in Mus musculus (Mouse).